The chain runs to 59 residues: Large ribosomal subunit protein bL32 (59 aa).

It belongs to the bacterial ribosomal protein bL32 family.

The protein is Large ribosomal subunit protein bL32 of Mycoplasma capricolum subsp. capricolum (strain California kid / ATCC 27343 / NCTC 10154).